The following is a 197-amino-acid chain: Phosphoheptose isomerase (197 aa).

Residues 36-197 enclose the SIS domain; that stretch reads MVNALLNEGK…IDSQLFGSEE (162 aa). Residue 51-53 coordinates substrate; it reads NGG. Zn(2+) is bound by residues histidine 60 and glutamate 64. Residues glutamate 64, 93 to 94, 119 to 121, serine 124, and glutamine 174 each bind substrate; these read ND and STS. Residues glutamine 174 and histidine 182 each coordinate Zn(2+).

This sequence belongs to the SIS family. GmhA subfamily. Homotetramer. Requires Zn(2+) as cofactor.

It localises to the cytoplasm. The catalysed reaction is 2 D-sedoheptulose 7-phosphate = D-glycero-alpha-D-manno-heptose 7-phosphate + D-glycero-beta-D-manno-heptose 7-phosphate. It functions in the pathway carbohydrate biosynthesis; D-glycero-D-manno-heptose 7-phosphate biosynthesis; D-glycero-alpha-D-manno-heptose 7-phosphate and D-glycero-beta-D-manno-heptose 7-phosphate from sedoheptulose 7-phosphate: step 1/1. Functionally, catalyzes the isomerization of sedoheptulose 7-phosphate in D-glycero-D-manno-heptose 7-phosphate. The chain is Phosphoheptose isomerase from Pseudomonas putida (strain W619).